A 277-amino-acid chain; its full sequence is Bis(5'-nucleosyl)-tetraphosphatase, symmetrical (277 aa).

The protein belongs to the Ap4A hydrolase family.

It carries out the reaction P(1),P(4)-bis(5'-adenosyl) tetraphosphate + H2O = 2 ADP + 2 H(+). Functionally, hydrolyzes diadenosine 5',5'''-P1,P4-tetraphosphate to yield ADP. The chain is Bis(5'-nucleosyl)-tetraphosphatase, symmetrical from Bordetella bronchiseptica (strain ATCC BAA-588 / NCTC 13252 / RB50) (Alcaligenes bronchisepticus).